A 430-amino-acid chain; its full sequence is Evolutionarily conserved signaling intermediate in Toll pathway, mitochondrial (430 aa).

The transit peptide at 1–48 directs the protein to the mitochondrion; sequence MSWVQATLLARGLCRAWGGICRAALPGTSISQVPRQLPRGLHCSAAPH. The disordered stretch occupies residues 41–66; the sequence is LHCSAAPHSSEQSLVSSPPEPRQRPT. Residues 47–56 show a composition bias toward polar residues; it reads PHSSEQSLVS. Residue Lys372 forms a Glycyl lysine isopeptide (Lys-Gly) (interchain with G-Cter in ubiquitin) linkage. The segment at 400–430 is disordered; the sequence is LHTSSAGLEEPPPPEDHEEDDSRQRQQQGQS. The span at 411 to 420 shows a compositional bias: acidic residues; sequence PPPEDHEEDD.

Belongs to the ECSIT family. Interacts with MAP3K1, SMAD4 and TRAF6. Interacts with SMAD1 only after BMP4-treatment. Part of the mitochondrial complex I assembly/MCIA complex that comprises at least the core subunits TMEM126B, NDUFAF1, ECSIT and ACAD9 and complement subunits such as COA1 and TMEM186. Interacts with NDUFAF1. Interacts with ACAD9. Interacts with TRIM59. Interacts with TMEM70 and TMEM242. Interacts (when ubiquitinated) with NF-kappa-B subunits RELA and NFKB1. Interacts with RIGI, IFIT1 and MAVS; these interactions promote RLR-mediated type I IFN induction. Interacts with SQSTM1; this interaction inhibits TLR4 signaling via functional regulation of the TRAF6-ECSIT complex. Interacts with cereblon/CRBN; this interaction inhibits the ubiquitination of ECSIT. Post-translationally, ubiquitinated on Lys-372; leading to translocation in the nucleus together with RELA and NFKB1 and expression of NF-kappa-B-dependent genes.

It is found in the cytoplasm. Its subcellular location is the nucleus. The protein resides in the mitochondrion. Functionally, adapter protein that plays a role in different signaling pathways including TLRs and IL-1 pathways or innate antiviral induction signaling. Plays a role in the activation of NF-kappa-B by forming a signal complex with TRAF6 and TAK1/MAP3K7 to activate TAK1/MAP3K7 leading to activation of IKKs. Once ubiquitinated, interacts with the dissociated RELA and NFKB1 proteins and translocates to the nucleus where it induces NF-kappa-B-dependent gene expression. Plays a role in innate antiviral immune response by bridging the pattern recognition receptors RIGI and MDA5/IFIT1 to the MAVS complex at the mitochondrion. Promotes proteolytic activation of MAP3K1. Involved in the BMP signaling pathway. Required for normal embryonic development. Its function is as follows. As part of the MCIA complex, involved in the assembly of the mitochondrial complex I. In Macaca fascicularis (Crab-eating macaque), this protein is Evolutionarily conserved signaling intermediate in Toll pathway, mitochondrial.